The following is a 61-amino-acid chain: Temporin-1Tb (61 aa).

An N-terminal signal peptide occupies residues M1 to C22. Residues E23–E44 constitute a propeptide that is removed on maturation. L59 carries the leucine amide modification.

The protein belongs to the frog skin active peptide (FSAP) family. Temporin subfamily. Homo-oligomerizes in membranes as homodimers, homotrimers, or even homotetramers. Oligomerizes in presence of LPS. In Gram-positive bacterial mimetic membranes, the aggregation is weakly pronounced, and penetration proceeds more rapidly and is deeper than in Gram-negative bacterial mimetic membranes where aggregation is high. Homo-oligomerization is prevented by temporin-L. As to expression, expressed by the skin glands.

It localises to the secreted. The protein resides in the target cell membrane. Its subcellular location is the target cell. It is found in the target cell cytoplasm. Its function is as follows. Amphipathic alpha-helical antimicrobial peptide with potent activity against Gram-positive bacteria, weak activity against Gram-negative bacteria, and moderate activity against fungi. Mainly acts by causing membrane permeabilization, but is unable to forme pore-like openings. Is also able to penetrate eukaryotic cells (keratinocytes), and kill intracellular S.aureus (both wild-type and MRSA) without injuring host cells. Shows inhibitory effect on biofilm formation of Gram-positive bacteria, but not of Gram-negative bacteria. Shows antiviral activity against herpes simplex virus 1 (HSV-1) by disrupting the viral envelope. Also displays anti-leishmania activity by damaging parasite membrane. Does not show hemolytic activity. Acts synergistically with temporin-L that improves temporin-1Tb activity by preventing its self-association in lipopolysaccharides (LPS). In vitro, promotes cell migration and wound healing. This Rana temporaria (European common frog) protein is Temporin-1Tb.